The sequence spans 740 residues: MPEQHPPITETTTGAASNGCPVVGHMKYPVEGGGNQDWWPNRLNLKVLHQNPAVADPMGAAFDYAAEVATIDVDALTRDIEEVMTTSQPWWPADYGHYGPLFIRMAWHAAGTYRIHDGRGGAGGGMQRFAPLNSWPDNASLDKARRLLWPVKKKYGKKLSWADLIVFAGNCALESMGFKTFGFGFGRVDQWEPDEVYWGKEATWLGDERYSGKRDLENPLAAVQMGLIYVNPEGPNGNPDPMAAAVDIRETFRRMAMNDVETAALIVGGHTFGKTHGAGPADLVGPEPEAAPLEQMGLGWKSSYGTGTGKDAITSGIEVVWTNTPTKWDNSFLEILYGYEWELTKSPAGAWQYTAKDGAGAGTIPDPFGGPGRSPTMLATDLSLRVDPIYERITRRWLEHPEELADEFAKAWYKLIHRDMGPVARYLGPLVPKQTLLWQDPVPAVSHDLVGEAEIASLKSQILASGLTVSQLVSTAWAAASSFRGSDKRGGANGGRIRLQPQVGWEVNDPDGDLRKVIRTLEEIQESFNSAAPGNIKVSFADLVVLGGCAAIEKAAKAAGHNITVPFTPGRTDASQEQTDVESFAVLEPKADGFRNYLGKGNPLPAEYMLLDKANLLTLSAPEMTVLVGGLRVLGANYKRLPLGVFTEASESLTNDFFVNLLDMGITWEPSPADDGTYQGKDGSGKVKWTGSRVDLVFGSNSELRALVEVYGADDAQPKFVQDFVAAWDKVMNLDRFDVR.

A cross-link (tryptophyl-tyrosyl-methioninium (Trp-Tyr) (with M-255)) is located at residues 107–229 (WHAAGTYRIH…LAAVQMGLIY (123 aa)). H108 functions as the Proton acceptor in the catalytic mechanism. The segment at residues 229–255 (YVNPEGPNGNPDPMAAAVDIRETFRRM) is a cross-link (tryptophyl-tyrosyl-methioninium (Tyr-Met) (with W-107)). Residue H270 participates in heme b binding.

This sequence belongs to the peroxidase family. Peroxidase/catalase subfamily. Homodimer. Requires heme b as cofactor. In terms of processing, formation of the three residue Trp-Tyr-Met cross-link is important for the catalase, but not the peroxidase activity of the enzyme.

The enzyme catalyses H2O2 + AH2 = A + 2 H2O. It carries out the reaction 2 H2O2 = O2 + 2 H2O. Functionally, bifunctional enzyme with both catalase and broad-spectrum peroxidase activity. May play a role in the intracellular survival of mycobacteria. The protein is Catalase-peroxidase of Mycobacterium bovis (strain ATCC BAA-935 / AF2122/97).